The sequence spans 441 residues: Protein SPMIP7 (441 aa).

In terms of tissue distribution, testis specific. Expressed at the spermatid stage.

Functionally, essential for normal spermatogenesis. The chain is Protein SPMIP7 (Spmip7) from Mus musculus (Mouse).